The primary structure comprises 1110 residues: RNA2 polyprotein (1110 aa).

Residues 195–215 (VHPGGPALPPPPPPPPIQKPP) are disordered. A compositionally biased stretch (pro residues) spans 200–213 (PALPPPPPPPPIQK).

This sequence belongs to the nepoviruses RNA2 polyprotein family. Specific enzymatic cleavages in vivo by the P1 encoded 3C-like protease yield mature proteins.

Its subcellular location is the host cell junction. It is found in the host plasmodesma. It localises to the virion. In terms of biological role, implicated in RNA2 replication. Could also be required for nematode transmission of the virus. Functionally, transports viral genome to neighboring plant cells directly through plasmosdesmata, without any budding. The movement protein allows efficient cell to cell propagation, by bypassing the host cell wall barrier. Acts by forming a tubular structure at the host plasmodesmata, enlarging it enough to allow free passage of virion capsids. In Arabis mosaic virus (isolate NW) (ArMV), this protein is RNA2 polyprotein.